A 183-amino-acid chain; its full sequence is Large ribosomal subunit protein uL6 (183 aa).

It belongs to the universal ribosomal protein uL6 family. Part of the 50S ribosomal subunit.

Functionally, this protein binds to the 23S rRNA, and is important in its secondary structure. It is located near the subunit interface in the base of the L7/L12 stalk, and near the tRNA binding site of the peptidyltransferase center. The sequence is that of Large ribosomal subunit protein uL6 from Chlamydia trachomatis serovar A (strain ATCC VR-571B / DSM 19440 / HAR-13).